Reading from the N-terminus, the 181-residue chain is Large ribosomal subunit protein uL6 (181 aa).

The protein belongs to the universal ribosomal protein uL6 family. As to quaternary structure, part of the 50S ribosomal subunit.

This protein binds to the 23S rRNA, and is important in its secondary structure. It is located near the subunit interface in the base of the L7/L12 stalk, and near the tRNA binding site of the peptidyltransferase center. This is Large ribosomal subunit protein uL6 from Rhodopirellula baltica (strain DSM 10527 / NCIMB 13988 / SH1).